Reading from the N-terminus, the 626-residue chain is MTKQEKAINLSESAQVDQQSVQPFPRSRKVYVEGSRPDIRVPMREISLDDTPTDFGGESNAPVLVYDTSGPYTDPDVIIDVRKGLPDVRSAWIEARGDTERLEGLSSDFGQQRLNDAELAKLRFAHVRNPRRAKAGANVSQMHYARQGIITAEMEYVAIRENMKLQEARAAGLLNEQHAGHSFGANIPKEITPEFVRQEIARGRAIIPANINHPEVEPMIIGRNFLVKINGNIGNSALGSSIEEEVAKLTWGIRWGSDTVMDLSTGKHIHETREWIIRNSPVPIGTVPIYQALEKVNGVAEDLTWELFRDTLIEQAEQGVDYFTIHAGVLLRYVPLTAKRVTGIVSRGGSIMAKWCLAHHKENFLYTHFDEICEIMKAYDVSFSLGDGLRPGSIADANDAAQFGELETLGELTKIAWKHDVQCMIEGPGHVPMQLIKENMDKQLECCDEAPFYTLGPLTTDIAPGYDHITSGIGAAMIGWFGCAMLCYVTPKEHLGLPNKDDVKTGIITYKIAAHAADLAKGHPGAQIRDNALSKARFEFRWEDQFNLGLDPDTARAFHDETLPKESAKVAHFCSMCGPKFCSMKITQEVREYAAKIEAVDVTVEQGMREQAERFRQEGSQLYHKV.

The tract at residues 1-22 (MTKQEKAINLSESAQVDQQSVQ) is disordered. Positions 10 to 22 (LSESAQVDQQSVQ) are enriched in polar residues. Substrate is bound by residues N232, M261, Y290, H326, 346–348 (SRG), 387–390 (DGLR), and E426. H430 is a binding site for Zn(2+). Position 453 (Y453) interacts with substrate. H494 contributes to the Zn(2+) binding site. Positions 574, 577, and 582 each coordinate [4Fe-4S] cluster.

Belongs to the ThiC family. As to quaternary structure, homodimer. It depends on [4Fe-4S] cluster as a cofactor.

It carries out the reaction 5-amino-1-(5-phospho-beta-D-ribosyl)imidazole + S-adenosyl-L-methionine = 4-amino-2-methyl-5-(phosphooxymethyl)pyrimidine + CO + 5'-deoxyadenosine + formate + L-methionine + 3 H(+). It participates in cofactor biosynthesis; thiamine diphosphate biosynthesis. Catalyzes the synthesis of the hydroxymethylpyrimidine phosphate (HMP-P) moiety of thiamine from aminoimidazole ribotide (AIR) in a radical S-adenosyl-L-methionine (SAM)-dependent reaction. In Pseudomonas putida (strain ATCC 47054 / DSM 6125 / CFBP 8728 / NCIMB 11950 / KT2440), this protein is Phosphomethylpyrimidine synthase.